The following is a 309-amino-acid chain: Putative pyridoxal kinase C6F6.11c (309 aa).

2 residues coordinate substrate: serine 12 and tyrosine 123. ATP is bound by residues 182–183 and 209–221; these read SS and LIPV…RGTG. Residue aspartate 222 coordinates substrate.

The protein belongs to the pyridoxine kinase family. It depends on a divalent metal cation as a cofactor.

The protein localises to the cytoplasm. It is found in the nucleus. It catalyses the reaction pyridoxal + ATP = pyridoxal 5'-phosphate + ADP + H(+). Functionally, required for synthesis of pyridoxal-5-phosphate from vitamin B6. The polypeptide is Putative pyridoxal kinase C6F6.11c (Schizosaccharomyces pombe (strain 972 / ATCC 24843) (Fission yeast)).